The following is a 155-amino-acid chain: FUN14 domain-containing protein 1 (155 aa).

Topologically, residues 1–47 (MASRNPPPQDYESDDESYEVLDLTEYARRHHWWNRVFGHSSGPMVEK) are cytoplasmic. A phosphoserine mark is found at Ser13 and Ser17. Residue Tyr18 is modified to Phosphotyrosine; by SRC. Positions 18 to 21 (YEVL) match the YXXL motif. The chain crosses the membrane as a helical span at residues 48 to 68 (YSVATQIVMGGVTGWCAGFLF). The Mitochondrial intermembrane portion of the chain corresponds to 69-74 (QKVGKL). Residues 75–95 (AATAVGGGFLLLQVASHSGYV) form a helical membrane-spanning segment. Residues 96-133 (QIDWKRVEKDVNKAKRQIKKRANKAAPEINNIIEEATD) lie on the Cytoplasmic side of the membrane. A Glycyl lysine isopeptide (Lys-Gly) (interchain with G-Cter in ubiquitin) cross-link involves residue Lys119. Residues 134-154 (FIKQNIVISSGFVGGFLLGLA) form a helical membrane-spanning segment. A topological domain (mitochondrial intermembrane) is located at residue Ser155.

The protein belongs to the FUN14 family. Interacts (via YXXL motif) with MAP1 LC3 family proteins MAP1LC3A, MAP1LC3B and GABARAP. Interacts with DNM1L/DPR1. Interacts with GPX4. In terms of processing, phosphorylation at Ser-13 by CK2 and at Tyr-18 by SRC inhibits activation of mitophagy. Following hypoxia, dephosphorylated at Tyr-18, leading to interaction with MAP1 LC3 family proteins and triggering mitophagy. Dephosphorylation is mediated by PGAM5. Phosphorylated by ULK1 at Ser-17 which enhances FUNDC1 binding to LC3. Ubiquitinated on Lys-119. Deubiquitinated by USP19; leading to hypoxia-induced DRP1 oligomerization and GTPase activity.

Its subcellular location is the mitochondrion outer membrane. Integral mitochondrial outer-membrane protein that mediates the formation of mitochondria-associated endoplasmic reticulum membranes (MAMs). In turn, mediates angiogenesis and neoangiogenesis through interference with intracellular Ca(2+) communication and regulation of the vascular endothelial growth factor receptor KDR/VEGFR2 expression at both mRNA and protein levels. Also acts as an activator of hypoxia-induced mitophagy, an important mechanism for mitochondrial quality and homeostasis, by interacting with and recruiting LC3 protein family to mitochondria. Mechanistically, recruits DRP1 at ER-mitochondria contact sites leading to DRP1 oligomerization and GTPase activity to facilitate mitochondrial fission during hypoxia. Additionally, plays a role in hepatic ferroptosis by interacting directly with glutathione peroxidase/GPX4 to facilitate its recruitment into mitochondria through TOM/TIM complex where it is degraded by mitophagy. The sequence is that of FUN14 domain-containing protein 1 (Fundc1) from Mus musculus (Mouse).